A 227-amino-acid polypeptide reads, in one-letter code: MAYPLQLGFQDAVSPIMEELLYFHDHTLMIVFLISSLVLYIITLMLTTKLTHTNTMNAQEVETVWTILPAIILILIALPSLRILYMMDEINNPSLTVKTMGHQWYWSYEYTDYEDLNFDSYMVPTSDLKPGDLRLLEVDNRVVLPMDVTVRMLISSEDVLHSWAVPSLGLKTDAIPGRLNQTTLMSTRPGLFYGQCSEICGSNHSFMPIVLELVPLQTFEKWTASLL.

Residues 1–14 (MAYPLQLGFQDAVS) are Mitochondrial intermembrane-facing. Residues 15–45 (PIMEELLYFHDHTLMIVFLISSLVLYIITLM) traverse the membrane as a helical segment. The Mitochondrial matrix segment spans residues 46-59 (LTTKLTHTNTMNAQ). A helical membrane pass occupies residues 60 to 87 (EVETVWTILPAIILILIALPSLRILYMM). At 88 to 227 (DEINNPSLTV…TFEKWTASLL (140 aa)) the chain is on the mitochondrial intermembrane side. Positions 161, 196, 198, 200, 204, and 207 each coordinate Cu cation. A Mg(2+)-binding site is contributed by Glu198.

It belongs to the cytochrome c oxidase subunit 2 family. Component of the cytochrome c oxidase (complex IV, CIV), a multisubunit enzyme composed of 14 subunits. The complex is composed of a catalytic core of 3 subunits MT-CO1, MT-CO2 and MT-CO3, encoded in the mitochondrial DNA, and 11 supernumerary subunits COX4I, COX5A, COX5B, COX6A, COX6B, COX6C, COX7A, COX7B, COX7C, COX8 and NDUFA4, which are encoded in the nuclear genome. The complex exists as a monomer or a dimer and forms supercomplexes (SCs) in the inner mitochondrial membrane with NADH-ubiquinone oxidoreductase (complex I, CI) and ubiquinol-cytochrome c oxidoreductase (cytochrome b-c1 complex, complex III, CIII), resulting in different assemblies (supercomplex SCI(1)III(2)IV(1) and megacomplex MCI(2)III(2)IV(2)). Found in a complex with TMEM177, COA6, COX18, COX20, SCO1 and SCO2. Interacts with TMEM177 in a COX20-dependent manner. Interacts with COX20. Interacts with COX16. It depends on Cu cation as a cofactor.

It localises to the mitochondrion inner membrane. The enzyme catalyses 4 Fe(II)-[cytochrome c] + O2 + 8 H(+)(in) = 4 Fe(III)-[cytochrome c] + 2 H2O + 4 H(+)(out). Its function is as follows. Component of the cytochrome c oxidase, the last enzyme in the mitochondrial electron transport chain which drives oxidative phosphorylation. The respiratory chain contains 3 multisubunit complexes succinate dehydrogenase (complex II, CII), ubiquinol-cytochrome c oxidoreductase (cytochrome b-c1 complex, complex III, CIII) and cytochrome c oxidase (complex IV, CIV), that cooperate to transfer electrons derived from NADH and succinate to molecular oxygen, creating an electrochemical gradient over the inner membrane that drives transmembrane transport and the ATP synthase. Cytochrome c oxidase is the component of the respiratory chain that catalyzes the reduction of oxygen to water. Electrons originating from reduced cytochrome c in the intermembrane space (IMS) are transferred via the dinuclear copper A center (CU(A)) of subunit 2 and heme A of subunit 1 to the active site in subunit 1, a binuclear center (BNC) formed by heme A3 and copper B (CU(B)). The BNC reduces molecular oxygen to 2 water molecules using 4 electrons from cytochrome c in the IMS and 4 protons from the mitochondrial matrix. The sequence is that of Cytochrome c oxidase subunit 2 (MT-CO2) from Hippopotamus amphibius (Hippopotamus).